The sequence spans 538 residues: ATP-dependent rRNA helicase RRP3 (538 aa).

The span at 1–11 shows a compositional bias: basic residues; that stretch reads MSSAKRVKLSH. The tract at residues 1 to 112 is disordered; sequence MSSAKRVKLS…SKEETPTKSF (112 aa). Low complexity predominate over residues 34–47; it reads KKITQAPKAAAPIK. Over residues 53-85 the composition is skewed to acidic residues; that stretch reads AEEDDDDDDKDDKDEEDEEQNDDSSDEASENDD. Over residues 92–112 the composition is skewed to basic and acidic residues; it reads EATKEGQTELPSKEETPTKSF. Positions 110 to 138 match the Q motif motif; it reads KSFRDLGIVEPLCEACEALKFKKPTPIQE. The Helicase ATP-binding domain maps to 141–312; that stretch reads IPLALQGRDV…RASLRDPLKV (172 aa). Residue 154 to 161 coordinates ATP; the sequence is AETGSGKT. The short motif at 260-263 is the DEAD box element; the sequence is DEAD. Positions 336–486 constitute a Helicase C-terminal domain; that stretch reads HKDVYLIYLA…LFQPDKEEVM (151 aa). Basic and acidic residues predominate over residues 498 to 512; sequence HAREEMKALHEDRGK. The interval 498 to 538 is disordered; it reads HAREEMKALHEDRGKKGAVLKGRKRGSATKRRHDDMDAEEG. The span at 513 to 528 shows a compositional bias: basic residues; the sequence is KGAVLKGRKRGSATKR.

The protein belongs to the DEAD box helicase family. DDX47/RRP3 subfamily. As to quaternary structure, interacts with the SSU processome.

It localises to the nucleus. The catalysed reaction is ATP + H2O = ADP + phosphate + H(+). Its function is as follows. ATP-dependent rRNA helicase required for pre-ribosomal RNA processing. Involved in the maturation of the 35S-pre-rRNA and to its cleavage to mature 18S rRNA. This Pyricularia oryzae (strain 70-15 / ATCC MYA-4617 / FGSC 8958) (Rice blast fungus) protein is ATP-dependent rRNA helicase RRP3.